Here is a 467-residue protein sequence, read N- to C-terminus: Putative alpha-amylase (467 aa).

Glu-145 (nucleophile) is an active-site residue.

It belongs to the glycosyl hydrolase 57 family.

The catalysed reaction is Endohydrolysis of (1-&gt;4)-alpha-D-glucosidic linkages in polysaccharides containing three or more (1-&gt;4)-alpha-linked D-glucose units.. The sequence is that of Putative alpha-amylase from Methanocaldococcus jannaschii (strain ATCC 43067 / DSM 2661 / JAL-1 / JCM 10045 / NBRC 100440) (Methanococcus jannaschii).